The sequence spans 184 residues: Large ribosomal subunit protein bL17 (184 aa).

The disordered stretch occupies residues 126-184; that stretch reads TRAARAAASKQTADEAQVEETPAEEVTEETAAEETTEAAQADEAPAEEAPVEEKKDEEK. The span at 141–161 shows a compositional bias: acidic residues; it reads AQVEETPAEEVTEETAAEETT.

Belongs to the bacterial ribosomal protein bL17 family. As to quaternary structure, part of the 50S ribosomal subunit. Contacts protein L32.

This chain is Large ribosomal subunit protein bL17, found in Corynebacterium efficiens (strain DSM 44549 / YS-314 / AJ 12310 / JCM 11189 / NBRC 100395).